The chain runs to 397 residues: Acetate kinase (397 aa).

Asn8 contributes to the Mg(2+) binding site. Lys15 contacts ATP. Residue Arg89 participates in substrate binding. The Proton donor/acceptor role is filled by Asp146. ATP-binding positions include 206-210 (HLGNG), 281-283 (DLR), and 329-333 (GVGEN). Glu382 serves as a coordination point for Mg(2+).

The protein belongs to the acetokinase family. As to quaternary structure, homodimer. Mg(2+) serves as cofactor. Requires Mn(2+) as cofactor.

It localises to the cytoplasm. The catalysed reaction is acetate + ATP = acetyl phosphate + ADP. It functions in the pathway metabolic intermediate biosynthesis; acetyl-CoA biosynthesis; acetyl-CoA from acetate: step 1/2. Its function is as follows. Catalyzes the formation of acetyl phosphate from acetate and ATP. Can also catalyze the reverse reaction. This is Acetate kinase from Bacillus thuringiensis subsp. konkukian (strain 97-27).